The primary structure comprises 287 residues: Protease HtpX (287 aa).

2 consecutive transmembrane segments (helical) span residues 4 to 24 (IFLLIATNMAILLVASIVMSI) and 33 to 53 (SGLLVFAAIFGFGGAFISLAI). His139 provides a ligand contact to Zn(2+). The active site involves Glu140. His143 provides a ligand contact to Zn(2+). 2 consecutive transmembrane segments (helical) span residues 154 to 174 (LIQGVVNTFVIFAARVVAGII) and 195 to 215 (AVVFVLDMLFGILASIIVAYF). Glu220 is a Zn(2+) binding site.

Belongs to the peptidase M48B family. Zn(2+) is required as a cofactor.

Its subcellular location is the cell inner membrane. This chain is Protease HtpX, found in Shewanella piezotolerans (strain WP3 / JCM 13877).